The chain runs to 253 residues: Peptidase inhibitor R3HDML (253 aa).

A signal peptide spans 1-24 (MPLLPSTVGLAGLLFWAGQAVNAL). A propeptide spanning residues 25–56 (IMPNATPAPAQPESTAMRLLSGLEVPRYRRKR) is cleaved from the precursor. One can recognise an SCP domain in the interval 67 to 207 (LDYHNHIRAS…HRAAYLVCNY (141 aa)). N-linked (GlcNAc...) asparagine glycosylation occurs at N120.

The protein belongs to the CRISP family.

The protein localises to the secreted. Its function is as follows. Putative serine protease inhibitor. The protein is Peptidase inhibitor R3HDML (R3HDML) of Homo sapiens (Human).